A 330-amino-acid chain; its full sequence is Ribosome production factor 1 (330 aa).

Disordered stretches follow at residues 1–32 (MKAV…FPPT) and 53–83 (EEKR…KEVP). Over residues 55-70 (KRKKRMELKKKKKKER) the composition is skewed to basic residues. Residues 71-83 (KALDDKAPPKEVP) are compositionally biased toward basic and acidic residues. Residues 123-306 (PKVLITTSDR…LRSLQKGTFD (184 aa)) form the Brix domain. Positions 284 to 301 (VGIQELGPRFTLKLRSLQ) are RNA-binding.

It is found in the nucleus. The protein resides in the nucleolus. May be required for ribosome biogenesis. The chain is Ribosome production factor 1 (rpf1) from Danio rerio (Zebrafish).